A 545-amino-acid chain; its full sequence is Chaperonin GroEL 4 (545 aa).

Residues 30–33 (TLGP), Lys-51, 87–91 (DGTTT), Gly-415, and Asp-495 contribute to the ATP site.

Belongs to the chaperonin (HSP60) family. Forms a cylinder of 14 subunits composed of two heptameric rings stacked back-to-back. Interacts with the co-chaperonin GroES.

It localises to the cytoplasm. The enzyme catalyses ATP + H2O + a folded polypeptide = ADP + phosphate + an unfolded polypeptide.. In terms of biological role, together with its co-chaperonin GroES, plays an essential role in assisting protein folding. The GroEL-GroES system forms a nano-cage that allows encapsulation of the non-native substrate proteins and provides a physical environment optimized to promote and accelerate protein folding. This chain is Chaperonin GroEL 4, found in Rhizobium meliloti (strain 1021) (Ensifer meliloti).